The primary structure comprises 138 residues: Protein SchB (138 aa).

Positions 42 to 108 constitute a Cupin type-2 domain; the sequence is VAVVRPGERI…NTGDVEARLV (67 aa). Positions 118 to 138 are disordered; sequence PDLGHVDTEETDETAPAGVVS.

Belongs to the SchB/CurC family.

In Streptomyces halstedii, this protein is Protein SchB (schB).